The primary structure comprises 158 residues: Small ribosomal subunit protein uS7 (158 aa).

This sequence belongs to the universal ribosomal protein uS7 family. In terms of assembly, part of the 30S ribosomal subunit. Contacts proteins S9 and S11.

Its function is as follows. One of the primary rRNA binding proteins, it binds directly to 16S rRNA where it nucleates assembly of the head domain of the 30S subunit. Is located at the subunit interface close to the decoding center, probably blocks exit of the E-site tRNA. This Parabacteroides distasonis (strain ATCC 8503 / DSM 20701 / CIP 104284 / JCM 5825 / NCTC 11152) protein is Small ribosomal subunit protein uS7.